The sequence spans 424 residues: Glutamyl-tRNA(Gln) amidotransferase subunit D (424 aa).

A disordered region spans residues N58–S79. Residues G66 to K78 are compositionally biased toward basic and acidic residues. The Asparaginase/glutaminase domain occupies P84–A406. Active-site residues include T94, T170, D171, and K247.

The protein belongs to the asparaginase 1 family. GatD subfamily. Heterodimer of GatD and GatE.

The enzyme catalyses L-glutamyl-tRNA(Gln) + L-glutamine + ATP + H2O = L-glutaminyl-tRNA(Gln) + L-glutamate + ADP + phosphate + H(+). In terms of biological role, allows the formation of correctly charged Gln-tRNA(Gln) through the transamidation of misacylated Glu-tRNA(Gln) in organisms which lack glutaminyl-tRNA synthetase. The reaction takes place in the presence of glutamine and ATP through an activated gamma-phospho-Glu-tRNA(Gln). The GatDE system is specific for glutamate and does not act on aspartate. The polypeptide is Glutamyl-tRNA(Gln) amidotransferase subunit D (Methanosarcina barkeri (strain Fusaro / DSM 804)).